The chain runs to 224 residues: SPI-2 type 3 secretion system stator protein (224 aa).

It belongs to the SctL stator family. As to quaternary structure, the core secretion machinery of the T3SS is composed of approximately 20 different proteins, including cytoplasmic components, a base, an export apparatus and a needle. This subunit is part of the cytosolic complex. Interacts directly with SsaN/SctN2 (T3SS-2 ATPase).

It is found in the cytoplasm. In terms of biological role, component of the type III secretion system (T3SS), also called injectisome, which is used to inject bacterial effector proteins into eukaryotic host cells. Acts as a regulator of the SsaN/SctN2 ATPase activity. In Salmonella typhimurium (strain LT2 / SGSC1412 / ATCC 700720), this protein is SPI-2 type 3 secretion system stator protein.